Reading from the N-terminus, the 1176-residue chain is DNA-directed RNA polymerase subunit beta (1176 aa).

Residues 13–30 (TDASLHQGRPQSSSNSSV) are compositionally biased toward polar residues. A disordered region spans residues 13-35 (TDASLHQGRPQSSSNSSVPGAPN).

This sequence belongs to the RNA polymerase beta chain family. In terms of assembly, the RNAP catalytic core consists of 2 alpha, 1 beta, 1 beta' and 1 omega subunit. When a sigma factor is associated with the core the holoenzyme is formed, which can initiate transcription.

It carries out the reaction RNA(n) + a ribonucleoside 5'-triphosphate = RNA(n+1) + diphosphate. In terms of biological role, DNA-dependent RNA polymerase catalyzes the transcription of DNA into RNA using the four ribonucleoside triphosphates as substrates. This is DNA-directed RNA polymerase subunit beta from Mycobacterium marinum (strain ATCC BAA-535 / M).